Reading from the N-terminus, the 1519-residue chain is DNA (cytosine-5)-methyltransferase 4 (1519 aa).

Residues 1–24 (MEMETKAGKQKKRSVDSDDDVSKE) show a composition bias toward basic and acidic residues. Residues 1–31 (MEMETKAGKQKKRSVDSDDDVSKERRPKRAA) form a disordered region. Lys583 is covalently cross-linked (Glycyl lysine isopeptide (Lys-Gly) (interchain with G-Cter in ubiquitin)). A disordered region spans residues 641 to 668 (ENVEEEELEEVEEEDENEEDDPEENELE). Positions 642–668 (NVEEEELEEVEEEDENEEDDPEENELE) are enriched in acidic residues. 2 BAH domains span residues 715-849 (DVVV…FSLP) and 916-1033 (TTLK…KQFP). The region spanning 1078–1512 (LATLDIFAGC…RKLKEALYLK (435 aa)) is the SAM-dependent MTase C5-type domain. Residue Cys1183 is part of the active site.

Belongs to the class I-like SAM-binding methyltransferase superfamily. C5-methyltransferase family. Expressed at low levels in vegetative and floral organs.

The protein localises to the nucleus. It carries out the reaction a 2'-deoxycytidine in DNA + S-adenosyl-L-methionine = a 5-methyl-2'-deoxycytidine in DNA + S-adenosyl-L-homocysteine + H(+). Maintains chromatin CpG methylation that plays a role in genomic imprinting, regulation of embryogenesis and seed viability. Required for proper patterns of CG DNA methylation in dividing cells. The sequence is that of DNA (cytosine-5)-methyltransferase 4 (MET4) from Arabidopsis thaliana (Mouse-ear cress).